Reading from the N-terminus, the 421-residue chain is UPF0300 protein C737.04 (421 aa).

Belongs to the UPF0300 family.

The protein localises to the cytoplasm. The chain is UPF0300 protein C737.04 from Schizosaccharomyces pombe (strain 972 / ATCC 24843) (Fission yeast).